The sequence spans 363 residues: 24-methylenesterol C-methyltransferase 2 (363 aa).

The helical transmembrane segment at 6-26 (MAWTAAGVGMALVYWFVWVMG) threads the bilayer.

The protein belongs to the class I-like SAM-binding methyltransferase superfamily. Erg6/SMT family.

The protein localises to the membrane. The enzyme catalyses 24-methylidenelophenol + S-adenosyl-L-methionine = (Z)-24-ethylidenelophenol + S-adenosyl-L-homocysteine + H(+). It functions in the pathway steroid biosynthesis; sterol biosynthesis. Functionally, catalyzes the methyl transfer from S-adenosyl-methionine to the methylene group of 24-methylene lophenol to form 24-ethylidene lophenol. This Oryza sativa subsp. japonica (Rice) protein is 24-methylenesterol C-methyltransferase 2 (Smt2-1).